Reading from the N-terminus, the 131-residue chain is Large ribosomal subunit protein bL17 (131 aa).

It belongs to the bacterial ribosomal protein bL17 family. In terms of assembly, part of the 50S ribosomal subunit. Contacts protein L32.

In Shewanella baltica (strain OS223), this protein is Large ribosomal subunit protein bL17.